Here is a 272-residue protein sequence, read N- to C-terminus: Putative pyruvate, phosphate dikinase regulatory protein (272 aa).

Position 154 to 161 (154 to 161 (GVSRTSKS)) interacts with ADP.

It belongs to the pyruvate, phosphate/water dikinase regulatory protein family. PDRP subfamily.

The catalysed reaction is N(tele)-phospho-L-histidyl/L-threonyl-[pyruvate, phosphate dikinase] + ADP = N(tele)-phospho-L-histidyl/O-phospho-L-threonyl-[pyruvate, phosphate dikinase] + AMP + H(+). It carries out the reaction N(tele)-phospho-L-histidyl/O-phospho-L-threonyl-[pyruvate, phosphate dikinase] + phosphate + H(+) = N(tele)-phospho-L-histidyl/L-threonyl-[pyruvate, phosphate dikinase] + diphosphate. Its function is as follows. Bifunctional serine/threonine kinase and phosphorylase involved in the regulation of the pyruvate, phosphate dikinase (PPDK) by catalyzing its phosphorylation/dephosphorylation. In Wolbachia pipientis subsp. Culex pipiens (strain wPip), this protein is Putative pyruvate, phosphate dikinase regulatory protein.